The following is a 518-amino-acid chain: Chromosomal replication initiator protein DnaA (518 aa).

The domain I, interacts with DnaA modulators stretch occupies residues 1–72 (MNEFWQHCSA…DLARDFWHSP (72 aa)). Residues 72–181 (PVDVQFVLDP…GESDSTYERS (110 aa)) form a domain II region. The disordered stretch occupies residues 155 to 178 (AAARRTWRPGAAAQAAGGESDSTY). The segment at 182–398 (KLNPVLTFDN…GALRKILAYS (217 aa)) is domain III, AAA+ region. 4 residues coordinate ATP: Gly226, Gly228, Lys229, and Thr230. The domain IV, binds dsDNA stretch occupies residues 399-518 (KFHGREITIE…LHVLEQTLKG (120 aa)).

It belongs to the DnaA family. As to quaternary structure, oligomerizes as a right-handed, spiral filament on DNA at oriC.

It is found in the cytoplasm. In terms of biological role, plays an essential role in the initiation and regulation of chromosomal replication. ATP-DnaA binds to the origin of replication (oriC) to initiate formation of the DNA replication initiation complex once per cell cycle. Binds the DnaA box (a 9 base pair repeat at the origin) and separates the double-stranded (ds)DNA. Forms a right-handed helical filament on oriC DNA; dsDNA binds to the exterior of the filament while single-stranded (ss)DNA is stabiized in the filament's interior. The ATP-DnaA-oriC complex binds and stabilizes one strand of the AT-rich DNA unwinding element (DUE), permitting loading of DNA polymerase. After initiation quickly degrades to an ADP-DnaA complex that is not apt for DNA replication. Binds acidic phospholipids. The sequence is that of Chromosomal replication initiator protein DnaA from Paraburkholderia phymatum (strain DSM 17167 / CIP 108236 / LMG 21445 / STM815) (Burkholderia phymatum).